The chain runs to 183 residues: ESX-1 secretion-associated protein EspH (183 aa).

Over residues methionine 1–alanine 16 the composition is skewed to acidic residues. Residues methionine 1–alanine 32 are disordered.

This Mycobacterium tuberculosis (strain ATCC 25618 / H37Rv) protein is ESX-1 secretion-associated protein EspH.